Reading from the N-terminus, the 465-residue chain is Kinesin-like protein KIN-1 (465 aa).

The 332-residue stretch at 3 to 334 (NVTVCARFRP…LRFGMRAKHI (332 aa)) folds into the Kinesin motor domain. ATP is bound at residue 87 to 94 (GQTGAGKT). The disordered stretch occupies residues 338-358 (PRASEVKSAKAQEEPSSVTKD). The segment covering 341–358 (SEVKSAKAQEEPSSVTKD) has biased composition (basic and acidic residues). Positions 402-444 (VYEDIVSKTIQSLQQAVDELQQKVKKLEAENIGIQEQALRNHE) form a coiled coil.

This sequence belongs to the TRAFAC class myosin-kinesin ATPase superfamily. Kinesin family. KIN-1 subfamily. As to quaternary structure, homodimer. Interacts with WIP1 and WIP2. As to expression, specifically expressed in ovules and anthers.

Kinesin-like motor protein that promotes synapsis and is required for proper crossover distribution in meiosis. Plays a role in the nuclear division cycles during megagametogenesis. This is Kinesin-like protein KIN-1 from Arabidopsis thaliana (Mouse-ear cress).